A 1501-amino-acid polypeptide reads, in one-letter code: MATQMVNQATGNSLFCTSTYSSISLDNDMYGLHDLSKADMAAPRLIMLANVALTGELNSGGCDYTLEGERQMAELTTVNDNSFSDSEGDRLEDSPTMDIQSRNFTMDIEPAECSKEGTSENDGTLLSNTLEEEVQKDKKAQAPSTTDDKIKCVKSKPFRCKPCQYKAESEEEFVHHIKIHSAKIYVDNDSKKNPQGKEADSSIPEESDISKGPIQCDGCGYNTNRFDHYLAHLKHHNKAGENERVYKCTICTYSTVSEYHWKKHLRNHYPRILYTCSQCSYFSDRKNNYIQHIRTHTGERPYQCIICLYSSSQKTHLTRHMRTHSGEKPFKCEQCSYVASNQHEVTRHARQVHNGPKPLTCPHCDYKTADRSNFKKHVELHVNPRQFLCPVCDYAASKKCNLQYHIKSRHSGCTNITMNVSKVKLRTKKGEVGDEDADTNKPMENGNIINRSVGKKLEETVKAEKRESCVKAKKRIVGMVDGQVAKKSRLSSTQKKIKASEVRPEKIVDKSRKSSFVKRKTDVLENPNDTQTSTLKKKKLKNARIVNTSEIKYDITKKLTGSVNKKENSFVKNMHKKKTGAQSSNGKKNMPNKITEKKEKGKQLDSKTSVASDITEEQTIVGKVANENYSEQVAASEVASSNVNSDSSESCCLLNDVMQTDLSINTTLETEVSTDHDTKSEHVSKAVMALVMQRDTQMDLSMLVDLKANFSKQEKTQDNLLMDIETISSDLLLQREEPNQVLYQNGIPNKLLREKCGAIADLPVDGAKTTVNLQIGKANFCFQNDCCQPDNLLVDGCKPMELREPSADLLMDHGHPSSDHLVGRGRPPYDHLINCGKSSRDPCVLTWDGEEPTCNKLVEVDEPTSNKLVYSNKSICIQLVGGAEPTKVQPARDEPTSVQPAAAGDEPTRVQPVVPGDEPTSVQPVVPGDEPTSVQLVVTRDKPTSIQTVTVRDEPSIIKTVVAGDEPYIVQTVGDEPSIAQTVEDEQSIVQTVAAKDEPSIAXTAAEDEPSIVQTVXAMDEPAIVQTVAAGDEPTSVQTVAAGDEPTSVQPLSREDPKSVQPIGEDQPTSVQPPGGDEQTNLLINSKTAYLPVCTKEAIGLSVARQDETELLVRRENRSVLSTVWDEPTDLSFERNVQSMNIPIDLSTTNQNPICMSKGMGCPLHLPVEWSEPFNLSMDMDWHKPANLSLVEPSDLSVRKGDSADLSLNNKKPADLSVVWGEPVDLSLGRSEPADLSVGMNQPAELKMGIPDTIGLLVEGRQLSVLTMGRGVESFDLLMGRVDHIDLSVERCEPIDLSVEKGIPRNLEISEGKHFGKLDNCYNLNCAAFQIKDQAKCNIIPENTSQSNTKLSVEIAEPHNHLQSMCVPSELHGNLDTTVQQSKHNECNNGTKEVGTSQLPCAVSRCVSXDEDEGIHSHDGSDISDNVSEMSYDSGLNGVPSVQKTLSSEPKVVINSSETKESFVCIFCDRTFRKEEEYTKHLRRHLVNVYYLKKAAKDIDN.

The C2H2-type 1 zinc-finger motif lies at 158–180; that stretch reads FRCKPCQYKAESEEEFVHHIKIH. The span at 186–200 shows a compositional bias: basic and acidic residues; that stretch reads VDNDSKKNPQGKEAD. The interval 186-209 is disordered; the sequence is VDNDSKKNPQGKEADSSIPEESDI. C2H2-type zinc fingers lie at residues 214-236, 246-268, 274-296, 302-324, 330-353, 359-381, and 387-410; these read IQCD…LKHH, YKCT…LRNH, YTCS…IRTH, YQCI…MRTH, FKCE…RQVH, LTCP…VELH, and FLCP…KSRH. Disordered regions lie at residues 491–514, 569–612, 885–929, and 1040–1079; these read SSTQ…SRKS, SFVK…SVAS, PTKV…VPGD, and VAAG…GDEQ. Basic and acidic residues-rich tracts occupy residues 498–512 and 594–605; these read KASE…DKSR and ITEKKEKGKQLD. Over residues 1067 to 1079 the composition is skewed to polar residues; the sequence is QPTSVQPPGGDEQ. The C2H2-type 9 zinc finger occupies 1463 to 1485; sequence FVCIFCDRTFRKEEEYTKHLRRH.

The protein resides in the nucleus. Its subcellular location is the cytoplasm. In terms of biological role, transcriptional repressor which binds neuron-restrictive silencer element (NRSE) and represses neuronal gene transcription in non-neuronal cells. Plays a role in the early development of the nervous system and is required for proper patterning of the neuroectoderm during gastrulation. This involves the correct speciation of the neuroepithelial domain and adequate development of the non-neural ectoderm. The protein is RE1-silencing transcription factor A (rest-a) of Xenopus laevis (African clawed frog).